The sequence spans 437 residues: Protein farnesyltransferase subunit beta (437 aa).

PFTB repeat units lie at residues 123 to 164 (ATDV…CIIG), 174 to 215 (REKL…SLTN), 222 to 263 (FEGT…VILK), 270 to 312 (LKSL…PLLH), and 332 to 374 (QQAL…SIAQ). (2E,6E)-farnesyl diphosphate contacts are provided by residues 248 to 251 (HGGY) and 291 to 294 (RCNK). 2 residues coordinate Zn(2+): D297 and C299. Position 300 to 303 (300 to 303 (YSFW)) interacts with (2E,6E)-farnesyl diphosphate. Residue H362 participates in Zn(2+) binding. T436 is modified (phosphothreonine).

The protein belongs to the protein prenyltransferase subunit beta family. In terms of assembly, heterodimer of FNTA and FNTB. Zn(2+) serves as cofactor.

The catalysed reaction is L-cysteinyl-[protein] + (2E,6E)-farnesyl diphosphate = S-(2E,6E)-farnesyl-L-cysteinyl-[protein] + diphosphate. Essential subunit of the farnesyltransferase complex. Catalyzes the transfer of a farnesyl moiety from farnesyl diphosphate to a cysteine at the fourth position from the C-terminus of several proteins having the C-terminal sequence Cys-aliphatic-aliphatic-X. The protein is Protein farnesyltransferase subunit beta (FNTB) of Bos taurus (Bovine).